A 196-amino-acid polypeptide reads, in one-letter code: Carnitine operon protein CaiE (196 aa).

A disordered region spans residues threonine 173–arginine 196.

It belongs to the transferase hexapeptide repeat family.

It functions in the pathway amine and polyamine metabolism; carnitine metabolism. Its function is as follows. Overproduction of CaiE stimulates the activity of CaiB and CaiD. This is Carnitine operon protein CaiE from Escherichia coli (strain SMS-3-5 / SECEC).